We begin with the raw amino-acid sequence, 545 residues long: Phenylalanine--tRNA ligase beta subunit (545 aa).

In terms of domain architecture, B5 spans 268–343 (FLHKIQNVRE…MSIGYNNLEP (76 aa)). The Mg(2+) site is built by Asp321, Asp327, Glu330, and Asp331.

Belongs to the phenylalanyl-tRNA synthetase beta subunit family. Type 2 subfamily. In terms of assembly, tetramer of two alpha and two beta subunits. Mg(2+) serves as cofactor.

It is found in the cytoplasm. It carries out the reaction tRNA(Phe) + L-phenylalanine + ATP = L-phenylalanyl-tRNA(Phe) + AMP + diphosphate + H(+). This chain is Phenylalanine--tRNA ligase beta subunit, found in Saccharolobus islandicus (strain Y.N.15.51 / Yellowstone #2) (Sulfolobus islandicus).